The sequence spans 134 residues: UPF0102 protein SYNW1051 (134 aa).

It belongs to the UPF0102 family.

This is UPF0102 protein SYNW1051 from Parasynechococcus marenigrum (strain WH8102).